The sequence spans 441 residues: Ribulose bisphosphate carboxylase large chain (441 aa).

Position 5 is an N6,N6,N6-trimethyllysine (K5). T164 is a binding site for substrate. K166 serves as the catalytic Proton acceptor. K168 lines the substrate pocket. Mg(2+) contacts are provided by K192, D194, and E195. K192 carries the post-translational modification N6-carboxylysine. The Proton acceptor role is filled by H285. Substrate contacts are provided by R286, H318, and S370.

Belongs to the RuBisCO large chain family. Type I subfamily. Heterohexadecamer of 8 large chains and 8 small chains; disulfide-linked. The disulfide link is formed within the large subunit homodimers. It depends on Mg(2+) as a cofactor. The disulfide bond which can form in the large chain dimeric partners within the hexadecamer appears to be associated with oxidative stress and protein turnover.

Its subcellular location is the plastid. It is found in the chloroplast. It catalyses the reaction 2 (2R)-3-phosphoglycerate + 2 H(+) = D-ribulose 1,5-bisphosphate + CO2 + H2O. The catalysed reaction is D-ribulose 1,5-bisphosphate + O2 = 2-phosphoglycolate + (2R)-3-phosphoglycerate + 2 H(+). Its function is as follows. RuBisCO catalyzes two reactions: the carboxylation of D-ribulose 1,5-bisphosphate, the primary event in carbon dioxide fixation, as well as the oxidative fragmentation of the pentose substrate in the photorespiration process. Both reactions occur simultaneously and in competition at the same active site. This is Ribulose bisphosphate carboxylase large chain from Hemionitis engywookii (Fendler's false cloak fern).